The primary structure comprises 349 residues: Isopentenyl-diphosphate delta-isomerase (349 aa).

6 to 7 serves as a coordination point for substrate; sequence RK. Residues 62–64, Ser93, and Asn122 contribute to the FMN site; that span reads AMT. Residue Gln152 participates in substrate binding. Glu153 contacts Mg(2+). FMN contacts are provided by residues Lys184, Thr214, 258-259, and 280-281; these read GG and AG.

The protein belongs to the IPP isomerase type 2 family. As to quaternary structure, homooctamer. Dimer of tetramers. FMN serves as cofactor. The cofactor is NADPH. Mg(2+) is required as a cofactor.

It is found in the cytoplasm. The enzyme catalyses isopentenyl diphosphate = dimethylallyl diphosphate. Involved in the biosynthesis of isoprenoids. Catalyzes the 1,3-allylic rearrangement of the homoallylic substrate isopentenyl (IPP) to its allylic isomer, dimethylallyl diphosphate (DMAPP). The polypeptide is Isopentenyl-diphosphate delta-isomerase (Bacillus cereus (strain 03BB102)).